The sequence spans 145 residues: Protein ImpA (145 aa).

Catalysis depends on for autocatalytic cleavage activity residues Ser64 and Lys101.

It belongs to the peptidase S24 family.

Functionally, involved in UV protection and mutation. The sequence is that of Protein ImpA from Escherichia coli.